The following is a 197-amino-acid chain: Ribonuclease HII (197 aa).

The RNase H type-2 domain occupies K9–F197. D15, E16, and D107 together coordinate a divalent metal cation.

Belongs to the RNase HII family. Requires Mn(2+) as cofactor. The cofactor is Mg(2+).

The protein localises to the cytoplasm. The catalysed reaction is Endonucleolytic cleavage to 5'-phosphomonoester.. Its function is as follows. Endonuclease that specifically degrades the RNA of RNA-DNA hybrids. This chain is Ribonuclease HII, found in Haemophilus influenzae (strain PittEE).